Consider the following 234-residue polypeptide: Glucosamine-6-phosphate deaminase (234 aa).

The active-site Proton acceptor; for enolization step is the Asp-62. The active-site For ring-opening step is the Asn-128. The active-site Proton acceptor; for ring-opening step is His-130. The active-site For ring-opening step is the Glu-135.

This sequence belongs to the glucosamine/galactosamine-6-phosphate isomerase family. NagB subfamily.

It carries out the reaction alpha-D-glucosamine 6-phosphate + H2O = beta-D-fructose 6-phosphate + NH4(+). It functions in the pathway amino-sugar metabolism; N-acetylneuraminate degradation; D-fructose 6-phosphate from N-acetylneuraminate: step 5/5. Catalyzes the reversible isomerization-deamination of glucosamine 6-phosphate (GlcN6P) to form fructose 6-phosphate (Fru6P) and ammonium ion. This is Glucosamine-6-phosphate deaminase from Streptococcus pyogenes serotype M3 (strain ATCC BAA-595 / MGAS315).